Reading from the N-terminus, the 42-residue chain is Photosystem II reaction center protein J (42 aa).

The helical transmembrane segment at 10–30 (IPLWLVGTVVGTLAIGLLAVF) threads the bilayer.

The protein belongs to the PsbJ family. PSII is composed of 1 copy each of membrane proteins PsbA, PsbB, PsbC, PsbD, PsbE, PsbF, PsbH, PsbI, PsbJ, PsbK, PsbL, PsbM, PsbT, PsbX, PsbY, PsbZ, Psb30/Ycf12, at least 3 peripheral proteins of the oxygen-evolving complex and a large number of cofactors. It forms dimeric complexes.

It localises to the plastid. The protein resides in the chloroplast thylakoid membrane. One of the components of the core complex of photosystem II (PSII). PSII is a light-driven water:plastoquinone oxidoreductase that uses light energy to abstract electrons from H(2)O, generating O(2) and a proton gradient subsequently used for ATP formation. It consists of a core antenna complex that captures photons, and an electron transfer chain that converts photonic excitation into a charge separation. This chain is Photosystem II reaction center protein J, found in Chlamydomonas reinhardtii (Chlamydomonas smithii).